The following is a 21-amino-acid chain: Serine protease inhibitor 3 (21 aa).

Belongs to the protease inhibitor I3 (leguminous Kunitz-type inhibitor) family. In terms of tissue distribution, tubers.

The protein localises to the vacuole. Functionally, inhibits trypsin and chymotrypsin (serine proteases). Does not inhibit elastase, subtilisin, cathepsin L nor papain (serine and cysteine proteases). Protects the plant by inhibiting proteases of invading organisms, decreasing both hyphal growth and zoospores germination of Phytophthora infestans. The protein is Serine protease inhibitor 3 of Solanum tuberosum (Potato).